The sequence spans 556 residues: Formate--tetrahydrofolate ligase (556 aa).

Residue 65–72 coordinates ATP; it reads TSAGEGKT.

Belongs to the formate--tetrahydrofolate ligase family.

The enzyme catalyses (6S)-5,6,7,8-tetrahydrofolate + formate + ATP = (6R)-10-formyltetrahydrofolate + ADP + phosphate. It participates in one-carbon metabolism; tetrahydrofolate interconversion. The sequence is that of Formate--tetrahydrofolate ligase from Kosmotoga olearia (strain ATCC BAA-1733 / DSM 21960 / TBF 19.5.1).